A 246-amino-acid chain; its full sequence is Pyridoxine 5'-phosphate synthase (246 aa).

3-amino-2-oxopropyl phosphate is bound at residue Asn-12. 14 to 15 (DH) contacts 1-deoxy-D-xylulose 5-phosphate. Arg-23 provides a ligand contact to 3-amino-2-oxopropyl phosphate. His-48 acts as the Proton acceptor in catalysis. 1-deoxy-D-xylulose 5-phosphate-binding residues include Arg-50 and His-55. Glu-75 acts as the Proton acceptor in catalysis. Thr-105 contributes to the 1-deoxy-D-xylulose 5-phosphate binding site. The active-site Proton donor is His-196. 3-amino-2-oxopropyl phosphate-binding positions include Gly-197 and 218 to 219 (GH).

Belongs to the PNP synthase family. Homooctamer; tetramer of dimers.

Its subcellular location is the cytoplasm. The enzyme catalyses 3-amino-2-oxopropyl phosphate + 1-deoxy-D-xylulose 5-phosphate = pyridoxine 5'-phosphate + phosphate + 2 H2O + H(+). It functions in the pathway cofactor biosynthesis; pyridoxine 5'-phosphate biosynthesis; pyridoxine 5'-phosphate from D-erythrose 4-phosphate: step 5/5. Catalyzes the complicated ring closure reaction between the two acyclic compounds 1-deoxy-D-xylulose-5-phosphate (DXP) and 3-amino-2-oxopropyl phosphate (1-amino-acetone-3-phosphate or AAP) to form pyridoxine 5'-phosphate (PNP) and inorganic phosphate. This is Pyridoxine 5'-phosphate synthase from Pseudomonas syringae pv. tomato (strain ATCC BAA-871 / DC3000).